The primary structure comprises 212 residues: Ras-related protein Rab-15 (212 aa).

Serine 17, glycine 18, valine 19, glycine 20, lysine 21, threonine 22, cysteine 23, serine 35, serine 39, and threonine 40 together coordinate GTP. Threonine 22 is a binding site for Mg(2+). Short sequence motifs (switch) lie at residues 31 to 45 (NEFHSSHISTIGVDF) and 63 to 80 (DTAGQERYQTITKQYYRR). The Mg(2+) site is built by threonine 40 and aspartate 63. GTP contacts are provided by glycine 66, asparagine 121, lysine 122, aspartate 124, serine 151, and alanine 152. Positions 193–212 (LEEEEGKPEGPANSSKTCWC) are disordered. Residues cysteine 210 and cysteine 212 are each lipidated (S-geranylgeranyl cysteine). Residue cysteine 212 is modified to Cysteine methyl ester.

The protein belongs to the small GTPase superfamily. Rab family. In terms of assembly, the GTP bound form of RAB15 interacts with REP15. Interacts (GTP-bound form) with MICAL1, MICAL3, MICALCL, EHBP1 and EHBP1L1. The cofactor is Mg(2+).

The protein localises to the cell membrane. It catalyses the reaction GTP + H2O = GDP + phosphate + H(+). Its activity is regulated as follows. Regulated by guanine nucleotide exchange factors (GEFs) which promote the exchange of bound GDP for free GTP. Regulated by GTPase activating proteins (GAPs) which increase the GTP hydrolysis activity. Inhibited by GDP dissociation inhibitors (GDIs). Its function is as follows. The small GTPases Rab are key regulators of intracellular membrane trafficking, from the formation of transport vesicles to their fusion with membranes. Rabs cycle between an inactive GDP-bound form and an active GTP-bound form that is able to recruit to membranes different sets of downstream effectors directly responsible for vesicle formation, movement, tethering and fusion. RAB15 may act in concert with RAB3A in regulating aspects of synaptic vesicle membrane flow within the nerve terminal. The protein is Ras-related protein Rab-15 of Homo sapiens (Human).